Reading from the N-terminus, the 368-residue chain is MQTPSSHIIVRTPVIDSVGELYATRGLGKKTVLLFDENTRRLFGDAIIESMQRQGFRTIELVVPARETSKSVSTAWKLYGQMIEADVDRSWNLLCAGGGVVGDLGGYIAASYYRGIPVVQLPTTLLAMTDSSIGGKVAINHPLGKNLIGFFHMPELVLIDPAYLRTLPSREIYGGMSEVVKYGFIADREFFDLLTKHWDEVVRLEEPWLSKAVSRSAFIKANVVEKDFRETSGLRATLNFGHTFAHGLEKMAGYRNLRHGEAVTIGMVCALFLSHRPGFLAEADLREGLALLARFRFPRGLVNKRFLSLDRDELVESMLSDKKKIDKQLRFVLLDRIGHAFLHDKDITKTDVLQAIDDAMGWFSSAGF.

NAD(+) contacts are provided by residues 99-103 (GVVGD), 123-124 (TT), K136, and K145. 3 residues coordinate Zn(2+): E178, H242, and H259.

This sequence belongs to the sugar phosphate cyclases superfamily. Dehydroquinate synthase family. Requires NAD(+) as cofactor. It depends on Co(2+) as a cofactor. The cofactor is Zn(2+).

The protein resides in the cytoplasm. The catalysed reaction is 7-phospho-2-dehydro-3-deoxy-D-arabino-heptonate = 3-dehydroquinate + phosphate. The protein operates within metabolic intermediate biosynthesis; chorismate biosynthesis; chorismate from D-erythrose 4-phosphate and phosphoenolpyruvate: step 2/7. Functionally, catalyzes the conversion of 3-deoxy-D-arabino-heptulosonate 7-phosphate (DAHP) to dehydroquinate (DHQ). The chain is 3-dehydroquinate synthase from Chlorobaculum tepidum (strain ATCC 49652 / DSM 12025 / NBRC 103806 / TLS) (Chlorobium tepidum).